Reading from the N-terminus, the 371-residue chain is Bifunctional enzyme IspD/IspF (371 aa).

A 2-C-methyl-D-erythritol 4-phosphate cytidylyltransferase region spans residues 1–210 (MSEISLIMLA…LDLPKPSFEI (210 aa)). A 2-C-methyl-D-erythritol 2,4-cyclodiphosphate synthase region spans residues 211-371 (FTGNGFDVHE…NLKYFDWTRL (161 aa)). A divalent metal cation-binding residues include Asp217 and His219. Residues 217–219 (DVH) and 243–244 (HS) contribute to the 4-CDP-2-C-methyl-D-erythritol 2-phosphate site. His251 is a binding site for a divalent metal cation. Residues 265–267 (DIG), 270–274 (YPDTD), 341–344 (TTTE), Phe348, and Arg351 contribute to the 4-CDP-2-C-methyl-D-erythritol 2-phosphate site.

The protein in the N-terminal section; belongs to the IspD/TarI cytidylyltransferase family. IspD subfamily. It in the C-terminal section; belongs to the IspF family. A divalent metal cation is required as a cofactor.

The enzyme catalyses 2-C-methyl-D-erythritol 4-phosphate + CTP + H(+) = 4-CDP-2-C-methyl-D-erythritol + diphosphate. It catalyses the reaction 4-CDP-2-C-methyl-D-erythritol 2-phosphate = 2-C-methyl-D-erythritol 2,4-cyclic diphosphate + CMP. It participates in isoprenoid biosynthesis; isopentenyl diphosphate biosynthesis via DXP pathway; isopentenyl diphosphate from 1-deoxy-D-xylulose 5-phosphate: step 2/6. It functions in the pathway isoprenoid biosynthesis; isopentenyl diphosphate biosynthesis via DXP pathway; isopentenyl diphosphate from 1-deoxy-D-xylulose 5-phosphate: step 4/6. In terms of biological role, bifunctional enzyme that catalyzes the formation of 4-diphosphocytidyl-2-C-methyl-D-erythritol from CTP and 2-C-methyl-D-erythritol 4-phosphate (MEP) (IspD), and catalyzes the conversion of 4-diphosphocytidyl-2-C-methyl-D-erythritol 2-phosphate (CDP-ME2P) to 2-C-methyl-D-erythritol 2,4-cyclodiphosphate (ME-CPP) with a corresponding release of cytidine 5-monophosphate (CMP) (IspF). In Campylobacter jejuni subsp. doylei (strain ATCC BAA-1458 / RM4099 / 269.97), this protein is Bifunctional enzyme IspD/IspF.